Consider the following 173-residue polypeptide: Protein MOTHER of FT and TFL1 (173 aa).

At Ala2 the chain carries N-acetylalanine.

The protein belongs to the phosphatidylethanolamine-binding protein family. In terms of tissue distribution, expressed in gametophytes and developing seeds.

Its subcellular location is the cytoplasm. Its function is as follows. May form complexes with phosphorylated ligands by interfering with kinases and their effectors. Regulates seed germination via the abscisic acid (ABA) and gibberellic acid (GA)signaling pathways. During seed germination, MFT expression is directly repressed by ABI3 or promoted by ABI5 in the ABA signaling pathway. Involved in a negative feedback regulation of ABA signaling. Promotes embryo growth by direct repression of ABI5. In the GA signaling pathway, MFT expression is promoted by the DELLA protein RGL2 during seed germination. May regulate seed germination and fertility through the brassinosteroid (BR) signaling pathway. This Arabidopsis thaliana (Mouse-ear cress) protein is Protein MOTHER of FT and TFL1 (MFT).